The following is a 439-amino-acid chain: Chitinase-like protein Idgf1 (439 aa).

The signal sequence occupies residues 1–20 (MRFQLFYILGLLSVTSLTQA). Positions 22-439 (NNLVCYYDST…IVRSIKYFMG (418 aa)) constitute a GH18 domain. Cysteines 26 and 53 form a disulfide. N-linked (GlcNAc...) asparagine glycosylation is found at Asn-122, Asn-218, and Asn-346. A disulfide bridge links Cys-340 with Cys-423.

This sequence belongs to the glycosyl hydrolase 18 family. IDGF subfamily. Post-translationally, glycosylated.

The protein localises to the secreted. Its function is as follows. Cooperates with insulin-like peptides to stimulate the proliferation, polarization and motility of imaginal disk cells. May act by stabilizing the binding of insulin-like peptides to its receptor through a simultaneous interaction with both molecules to form a multiprotein signaling complex. The polypeptide is Chitinase-like protein Idgf1 (Idgf1) (Drosophila simulans (Fruit fly)).